A 356-amino-acid chain; its full sequence is Phosphoribosyl pyrophosphate synthase-associated protein 1 (356 aa).

Met-1 bears the N-acetylmethionine mark. Asn-2 bears the N-acetylproline mark. Phosphoserine occurs at positions 177 and 215.

This sequence belongs to the ribose-phosphate pyrophosphokinase family. As to quaternary structure, binds to PRPS1 and PRPS2. Ubiquitous.

In terms of biological role, seems to play a negative regulatory role in 5-phosphoribose 1-diphosphate synthesis. This Homo sapiens (Human) protein is Phosphoribosyl pyrophosphate synthase-associated protein 1 (PRPSAP1).